Reading from the N-terminus, the 237-residue chain is Ribosomal RNA small subunit methyltransferase G (237 aa).

S-adenosyl-L-methionine is bound by residues Gly78, Phe83, 129–130, and Arg148; that span reads AE.

Belongs to the methyltransferase superfamily. RNA methyltransferase RsmG family.

It is found in the cytoplasm. In terms of biological role, specifically methylates the N7 position of a guanine in 16S rRNA. In Streptococcus equi subsp. zooepidemicus (strain H70), this protein is Ribosomal RNA small subunit methyltransferase G.